We begin with the raw amino-acid sequence, 653 residues long: MSGSDKTYQLDETTLYSVLNLKYGATEVQIRKAYMKLARELHPDKSKSEEAGELFKKVAHAHFILTDKKEKMKYDSKLLAKGLYDYSPRIPNDKSRQNGMFKDTAKNSKTFTNNNNKDDASADTSKSKPRKSRPYEEQPYGFGVDTGRGSGKNIPLFKTFNAKSYQNSKKSVTPPRPKQPSEKNKRATSFSNENRNSSSVPLAKNQAKKTANSGSAVGSESRISSSGSESSSNVNSATGSSEEPDVHTQHKMARKDSYLSGFQSKARSPESPFQDPAQRHFVRTKYVSSRYDKRSLSPVKTTPNSSTETLNNVKNIFNSMSDRLRHTLFGNSNGDAEDEDQHNTQHDTERLFKRAKLPGRKILTDEEIDEIVKQQNEAESNDPDRQDYGNSFNLNVDNLSVNTQDFNHISEPSPEKEETKANKAPFLEEVYEIKSDNEHLEEKAAVSPDDGIDTLGLNELGETLPNNKEPFDMRNVGDSLDNYQVKRMKVSPKPRSVPSKTTPGSSHAEENLQEPVNIPLPRIYKLDPIPIEKFNVDLSISNIKLPEMPNLLCNVLDKAQVLECQQKTAEFTKQTNETKRKLLHILSQRCSADEELHDKLYRVENVNRMVEAKLYDLELMTKLSELLNRQRMVAENYAIMINTMYASGLLEKN.

In terms of domain architecture, J spans 14 to 78 (TLYSVLNLKY…KEKMKYDSKL (65 aa)). 2 disordered regions span residues 85 to 308 (DYSP…SSTE) and 490 to 512 (VSPK…EENL). 2 stretches are compositionally biased toward polar residues: residues 161–171 (NAKSYQNSKKS) and 187–200 (ATSF…SSSV). Residues 213–241 (SGSAVGSESRISSSGSESSSNVNSATGSS) show a composition bias toward low complexity. The span at 298–308 (PVKTTPNSSTE) shows a compositional bias: polar residues.

It localises to the cytoplasm. Its subcellular location is the nucleus. The protein is J protein JJJ2 (JJJ2) of Kluyveromyces lactis (strain ATCC 8585 / CBS 2359 / DSM 70799 / NBRC 1267 / NRRL Y-1140 / WM37) (Yeast).